The primary structure comprises 390 residues: Succinyl-diaminopimelate desuccinylase (390 aa).

Position 75 (histidine 75) interacts with Zn(2+). Residue aspartate 77 is part of the active site. Residue aspartate 108 participates in Zn(2+) binding. The Proton acceptor role is filled by glutamate 141. Zn(2+)-binding residues include glutamate 142, glutamate 170, and histidine 359.

The protein belongs to the peptidase M20A family. DapE subfamily. As to quaternary structure, homodimer. Zn(2+) is required as a cofactor. It depends on Co(2+) as a cofactor.

The enzyme catalyses N-succinyl-(2S,6S)-2,6-diaminopimelate + H2O = (2S,6S)-2,6-diaminopimelate + succinate. The protein operates within amino-acid biosynthesis; L-lysine biosynthesis via DAP pathway; LL-2,6-diaminopimelate from (S)-tetrahydrodipicolinate (succinylase route): step 3/3. Catalyzes the hydrolysis of N-succinyl-L,L-diaminopimelic acid (SDAP), forming succinate and LL-2,6-diaminopimelate (DAP), an intermediate involved in the bacterial biosynthesis of lysine and meso-diaminopimelic acid, an essential component of bacterial cell walls. In Maricaulis maris (strain MCS10) (Caulobacter maris), this protein is Succinyl-diaminopimelate desuccinylase.